Reading from the N-terminus, the 309-residue chain is Ribonuclease Z (309 aa).

Residues histidine 63, histidine 65, aspartate 67, histidine 68, histidine 141, aspartate 212, and histidine 270 each coordinate Zn(2+). Aspartate 67 functions as the Proton acceptor in the catalytic mechanism.

It belongs to the RNase Z family. In terms of assembly, homodimer. Zn(2+) is required as a cofactor.

The enzyme catalyses Endonucleolytic cleavage of RNA, removing extra 3' nucleotides from tRNA precursor, generating 3' termini of tRNAs. A 3'-hydroxy group is left at the tRNA terminus and a 5'-phosphoryl group is left at the trailer molecule.. Zinc phosphodiesterase, which displays some tRNA 3'-processing endonuclease activity. Probably involved in tRNA maturation, by removing a 3'-trailer from precursor tRNA. The sequence is that of Ribonuclease Z from Lactobacillus gasseri (strain ATCC 33323 / DSM 20243 / BCRC 14619 / CIP 102991 / JCM 1131 / KCTC 3163 / NCIMB 11718 / NCTC 13722 / AM63).